Consider the following 429-residue polypeptide: Large ribosomal subunit protein mL37 (429 aa).

Residues methionine 1–glycine 29 constitute a mitochondrion transit peptide. The segment at proline 12–glutamine 45 is disordered. Residues proline 22–arginine 33 show a composition bias toward pro residues.

This sequence belongs to the mitochondrion-specific ribosomal protein mL37 family. As to quaternary structure, component of the mitochondrial ribosome large subunit (39S) which comprises a 16S rRNA and about 50 distinct proteins.

It localises to the mitochondrion. This chain is Large ribosomal subunit protein mL37 (MRPL37), found in Gallus gallus (Chicken).